Here is a 189-residue protein sequence, read N- to C-terminus: MKQSSPTYLKHHFLIAMPHMADPNFAQTVTYLVEHNDQGAMGLVINRPSGLNLAEVLEQLKPDVLPPARCQHIEIYNGGPVQTDRGFVLHPSGLAYQSTLELGELAMSTSQDVLFAIAAGTGPEKSLISLGYAGWEAGQLEAELSDNAWLTCPADPAILFDLPAEERLSAAAACLGVNLSLLTAQAGHA.

Belongs to the UPF0301 (AlgH) family.

The chain is UPF0301 protein PSPA7_0505 from Pseudomonas paraeruginosa (strain DSM 24068 / PA7) (Pseudomonas aeruginosa (strain PA7)).